The following is a 94-amino-acid chain: Large ribosomal subunit protein uL29 (94 aa).

The disordered stretch occupies residues 66–94 (NPGERKSRVLSRAKRKKKNLARLSAKVKG). A compositionally biased stretch (basic residues) spans 73–94 (RVLSRAKRKKKNLARLSAKVKG).

The protein belongs to the universal ribosomal protein uL29 family.

This is Large ribosomal subunit protein uL29 from Leptospira borgpetersenii serovar Hardjo-bovis (strain JB197).